A 150-amino-acid polypeptide reads, in one-letter code: UPF0178 protein Reut_B5138 (150 aa).

It belongs to the UPF0178 family.

The polypeptide is UPF0178 protein Reut_B5138 (Cupriavidus pinatubonensis (strain JMP 134 / LMG 1197) (Cupriavidus necator (strain JMP 134))).